A 177-amino-acid polypeptide reads, in one-letter code: Deoxyuridine 5'-triphosphate nucleotidohydrolase (177 aa).

Residues 83–85 (RSG), Asn96, 100–102 (TID), and Lys110 each bind substrate. Over residues 150–163 (DLTSSQTDLSNQPN) the composition is skewed to polar residues. Positions 150–177 (DLTSSQTDLSNQPNTGRGTGGFGSTGQK) are disordered. Positions 166-177 (RGTGGFGSTGQK) are enriched in gly residues.

Belongs to the dUTPase family. The cofactor is Mg(2+).

The catalysed reaction is dUTP + H2O = dUMP + diphosphate + H(+). It functions in the pathway pyrimidine metabolism; dUMP biosynthesis; dUMP from dCTP (dUTP route): step 2/2. In terms of biological role, this enzyme is involved in nucleotide metabolism: it produces dUMP, the immediate precursor of thymidine nucleotides and it decreases the intracellular concentration of dUTP so that uracil cannot be incorporated into DNA. This Bartonella bacilliformis (strain ATCC 35685 / KC583 / Herrer 020/F12,63) protein is Deoxyuridine 5'-triphosphate nucleotidohydrolase.